A 792-amino-acid chain; its full sequence is MITEEAFPVEPWQIRETRLDLNLLAQSESLFALSNGHIGLRGNLDEGEPYGLPGTYLNSFYEIRPLPYAEAGYGYPEAGQTVVDVTNGKILRLFVEDEPFDVRYGEVIFHERVLDLCAGTLTRRANWRSPADKQVKVVSTRLVSLAHRSVAAIEYVVEALDKFVRVTVQSELVSNEDQPETSGDPRVSAILDNPLEAVEHEATERGGLLMHRTRASSLMMAAGMDHEVEVPGRVEITTDARPDLARTTVICGLRPGQKLRIVKYLAYGWSSLRSRPALHDQATAALHTARYSGWQGLLDAQRAYLNEFWDSADVEVEGDPESQQAVRFGLFHLLQASARAERRAIPSKGLTGTGYDGHAFWDTEGFVLPVLTYTAPHAVADALRWRASTLQLAKDRAAELGLDGASFCWRTIRGQECSAYWPAGTAAWHINADIAMAFERYRIVTGDHSLEEECGLAVLIETARLWLSLGHHDRHGVWHLDGVTGPDEYTAVVRDNVFTNLMAASNLITAADACLRQPEAAKAMGVTTEEMAAWRDAADAANIPYDDELGVHQQCEGFTTFAEWDFEANTTYPLFLHEAYVRLYPAQVIKQADLVLAMQWQSHAFTPEQKARNVDYYERRMVRDSSLSACTQAVMCAEVGHLELAHDYAYEAALIDLRDLHRNTRDGLHMASLAGAWTALVGGFGGLRDDEGILSIDPQLPHGISRLRFRLRWRGFRLTVDARHADVTYTLRDGPGGELTIRHAGEHLTLKSDSPSTIAVRDRKPLLPPPSQPPGREPVSRRHKSLIISAAR.

Trp-361 to Asp-362 is a binding site for substrate. The active-site Proton donor is the Glu-488. Lys-590 to Gln-591 serves as a coordination point for substrate. The tract at residues Asp-753–Arg-792 is disordered. Residues Leu-766–Arg-776 show a composition bias toward pro residues.

The protein belongs to the glycosyl hydrolase 65 family.

This is an uncharacterized protein from Mycobacterium leprae (strain TN).